The primary structure comprises 381 residues: Cytochrome b (381 aa).

4 helical membrane-spanning segments follow: residues 34–54, 78–99, 114–134, and 179–199; these read FGSL…FLAM, WLIR…YLHI, WNIG…GYVL, and FFAF…IHLL. Heme b is bound by residues histidine 84 and histidine 98. Residues histidine 183 and histidine 197 each contribute to the heme b site. Histidine 202 contacts a ubiquinone. The next 4 helical transmembrane spans lie at 227–247, 289–309, 321–341, and 348–368; these read YKDL…ALFT, LGGV…PLLH, LTQI…WIGG, and FIMV…IIMP.

It belongs to the cytochrome b family. In terms of assembly, the cytochrome bc1 complex contains 3 respiratory subunits (MT-CYB, CYC1 and UQCRFS1), 2 core proteins (UQCRC1 and UQCRC2) and probably 6 low-molecular weight proteins. Requires heme b as cofactor.

The protein localises to the mitochondrion inner membrane. Functionally, component of the ubiquinol-cytochrome c reductase complex (complex III or cytochrome b-c1 complex) that is part of the mitochondrial respiratory chain. The b-c1 complex mediates electron transfer from ubiquinol to cytochrome c. Contributes to the generation of a proton gradient across the mitochondrial membrane that is then used for ATP synthesis. The sequence is that of Cytochrome b (mt-cyb) from Negaprion brevirostris (Lemon shark).